The following is a 729-amino-acid chain: Translation initiation factor IF-2 (729 aa).

Residues 20 to 141 (QFAGGGRGPG…TTTVRAPVRP (122 aa)) form a disordered region. The span at 22–91 (AGGGRGPGNP…PGGGRGGGRG (70 aa)) shows a compositional bias: gly residues. Over residues 92-108 (GDGRRRDESFVENEGGR) the composition is skewed to basic and acidic residues. Residues 112–127 (SGRTTSTATTARTPGG) are compositionally biased toward low complexity. Positions 229–396 (PRPPVVTIMG…IILLVADLNE (168 aa)) constitute a tr-type G domain. Residues 238 to 245 (GHVDHGKT) are G1. 238–245 (GHVDHGKT) is a binding site for GTP. Residues 263 to 267 (GITQH) form a G2 region. The interval 284 to 287 (DTPG) is G3. GTP is bound by residues 284–288 (DTPGH) and 338–341 (NKID). Positions 338–341 (NKID) are G4. Residues 374 to 376 (SAK) form a G5 region.

It belongs to the TRAFAC class translation factor GTPase superfamily. Classic translation factor GTPase family. IF-2 subfamily.

It localises to the cytoplasm. One of the essential components for the initiation of protein synthesis. Protects formylmethionyl-tRNA from spontaneous hydrolysis and promotes its binding to the 30S ribosomal subunits. Also involved in the hydrolysis of GTP during the formation of the 70S ribosomal complex. This is Translation initiation factor IF-2 from Roseiflexus sp. (strain RS-1).